The sequence spans 39 residues: Osmotin-like protein (39 aa).

Belongs to the thaumatin family. In terms of processing, contains intrachain disulfide bonds.

Its function is as follows. May be an important antifungal protein. The sequence is that of Osmotin-like protein from Hevea brasiliensis (Para rubber tree).